Reading from the N-terminus, the 83-residue chain is UPF0248 protein TGAM_1209 (83 aa).

This sequence belongs to the UPF0248 family.

This is UPF0248 protein TGAM_1209 from Thermococcus gammatolerans (strain DSM 15229 / JCM 11827 / EJ3).